A 69-amino-acid polypeptide reads, in one-letter code: Conotoxin Lp3.1 (69 aa).

A signal peptide spans 1-20 (MLKMGVLLFIFLVLFPLTTL). Positions 21–54 (ELDTDRPVERHAAIKQDLKPQERRGIRLHAPRDE) are excised as a propeptide. 3 cysteine pairs are disulfide-bonded: C55–C67, C56–C65, and C61–C68.

Belongs to the conotoxin M superfamily. As to expression, expressed by the venom duct.

It is found in the secreted. This Conus leopardus (Leopard cone) protein is Conotoxin Lp3.1.